Here is a 270-residue protein sequence, read N- to C-terminus: Methylthioribulose-1-phosphate dehydratase (270 aa).

Cysteine 122 contacts substrate. The Zn(2+) site is built by histidine 140 and histidine 142. Glutamate 165 (proton donor/acceptor) is an active-site residue. A Zn(2+)-binding site is contributed by histidine 230.

This sequence belongs to the aldolase class II family. MtnB subfamily. Zn(2+) is required as a cofactor.

The protein localises to the cytoplasm. It carries out the reaction 5-(methylsulfanyl)-D-ribulose 1-phosphate = 5-methylsulfanyl-2,3-dioxopentyl phosphate + H2O. It functions in the pathway amino-acid biosynthesis; L-methionine biosynthesis via salvage pathway; L-methionine from S-methyl-5-thio-alpha-D-ribose 1-phosphate: step 2/6. Its function is as follows. Catalyzes the dehydration of methylthioribulose-1-phosphate (MTRu-1-P) into 2,3-diketo-5-methylthiopentyl-1-phosphate (DK-MTP-1-P). The sequence is that of Methylthioribulose-1-phosphate dehydratase from Candida albicans (strain WO-1) (Yeast).